The chain runs to 577 residues: Urease subunit alpha (577 aa).

Residues 136–577 (GGIDCHVHFI…LPMAQRYFLF (442 aa)) form the Urease domain. The Ni(2+) site is built by His141, His143, and Lys224. At Lys224 the chain carries N6-carboxylysine. Residue His226 participates in substrate binding. Ni(2+)-binding residues include His253 and His279. His327 acts as the Proton donor in catalysis. Position 367 (Asp367) interacts with Ni(2+).

This sequence belongs to the metallo-dependent hydrolases superfamily. Urease alpha subunit family. As to quaternary structure, heterotrimer of UreA (gamma), UreB (beta) and UreC (alpha) subunits. Three heterotrimers associate to form the active enzyme. Requires Ni cation as cofactor. Post-translationally, carboxylation allows a single lysine to coordinate two nickel ions.

The protein resides in the cytoplasm. The catalysed reaction is urea + 2 H2O + H(+) = hydrogencarbonate + 2 NH4(+). It functions in the pathway nitrogen metabolism; urea degradation; CO(2) and NH(3) from urea (urease route): step 1/1. The chain is Urease subunit alpha from Mycobacteroides abscessus (strain ATCC 19977 / DSM 44196 / CCUG 20993 / CIP 104536 / JCM 13569 / NCTC 13031 / TMC 1543 / L948) (Mycobacterium abscessus).